A 913-amino-acid chain; its full sequence is Valine--tRNA ligase (913 aa).

Positions 49-59 (PNVTGNLHLGH) match the 'HIGH' region motif. The short motif at 544-548 (KMSKS) is the 'KMSKS' region element. K547 provides a ligand contact to ATP. Residues 851-912 (DWVKKQQKRL…ERLEGVLAQL (62 aa)) adopt a coiled-coil conformation.

Belongs to the class-I aminoacyl-tRNA synthetase family. ValS type 1 subfamily. Monomer.

It is found in the cytoplasm. The catalysed reaction is tRNA(Val) + L-valine + ATP = L-valyl-tRNA(Val) + AMP + diphosphate. Its function is as follows. Catalyzes the attachment of valine to tRNA(Val). As ValRS can inadvertently accommodate and process structurally similar amino acids such as threonine, to avoid such errors, it has a 'posttransfer' editing activity that hydrolyzes mischarged Thr-tRNA(Val) in a tRNA-dependent manner. This chain is Valine--tRNA ligase, found in Deinococcus radiodurans (strain ATCC 13939 / DSM 20539 / JCM 16871 / CCUG 27074 / LMG 4051 / NBRC 15346 / NCIMB 9279 / VKM B-1422 / R1).